The sequence spans 177 residues: Ribosome maturation factor RimP (177 aa).

It belongs to the RimP family.

It localises to the cytoplasm. Functionally, required for maturation of 30S ribosomal subunits. The protein is Ribosome maturation factor RimP of Methylibium petroleiphilum (strain ATCC BAA-1232 / LMG 22953 / PM1).